Here is a 257-residue protein sequence, read N- to C-terminus: Leucine-rich repeat-containing protein 3 (257 aa).

Positions methionine 1–serine 32 are cleaved as a signal peptide. In terms of domain architecture, LRRNT spans cysteine 33–alanine 64. 3 LRR repeats span residues aspartate 65–histidine 86, glutamine 89–glycine 110, and glycine 114–lysine 135. In terms of domain architecture, LRRCT spans asparagine 145–threonine 198. Residues valine 205 to tyrosine 225 form a helical membrane-spanning segment.

Belongs to the LRRC3 family.

The protein resides in the membrane. The protein is Leucine-rich repeat-containing protein 3 (Lrrc3) of Mus musculus (Mouse).